A 73-amino-acid polypeptide reads, in one-letter code: uncharacterized protein (73 aa).

The chain crosses the membrane as a helical span at residues 37–57 (AIIITVAVVAFGALTLGAIGA).

The protein resides in the membrane. This is an uncharacterized protein from Natronomonas pharaonis (strain ATCC 35678 / DSM 2160 / CIP 103997 / JCM 8858 / NBRC 14720 / NCIMB 2260 / Gabara) (Halobacterium pharaonis).